The sequence spans 205 residues: LIM domain-containing protein PLIM2b (205 aa).

LIM zinc-binding domains lie at 8–68 and 102–162; these read DKCN…LFKE and DKCA…LFME. The interval 177–205 is disordered; it reads RTASGNTLPPEPTEDVAVEAKEENGVSES. Over residues 194–205 the composition is skewed to basic and acidic residues; the sequence is VEAKEENGVSES.

Interacts with F-actin. Predominantly expressed in flowers and in pollen grains. Detected in vasculature and roots.

The protein resides in the cytoplasm. It is found in the cytoskeleton. Its function is as follows. Binds to actin filaments and promotes cross-linking into thick bundles. Has an actin-stabilizing activity. The actin regulatory activities are inhibited by pH &gt; 6.8 but are [Ca(2+)] independent. This Arabidopsis thaliana (Mouse-ear cress) protein is LIM domain-containing protein PLIM2b.